The primary structure comprises 550 residues: Chaperonin GroEL (550 aa).

ATP is bound by residues 30–33 (TLGP), Lys-51, 87–91 (DGTTT), Gly-415, 479–481 (NAA), and Asp-495.

It belongs to the chaperonin (HSP60) family. Forms a cylinder of 14 subunits composed of two heptameric rings stacked back-to-back. Interacts with the co-chaperonin GroES.

The protein localises to the cytoplasm. It carries out the reaction ATP + H2O + a folded polypeptide = ADP + phosphate + an unfolded polypeptide.. Its function is as follows. Together with its co-chaperonin GroES, plays an essential role in assisting protein folding. The GroEL-GroES system forms a nano-cage that allows encapsulation of the non-native substrate proteins and provides a physical environment optimized to promote and accelerate protein folding. In Aromatoleum aromaticum (strain DSM 19018 / LMG 30748 / EbN1) (Azoarcus sp. (strain EbN1)), this protein is Chaperonin GroEL.